We begin with the raw amino-acid sequence, 309 residues long: Ribosomal RNA small subunit methyltransferase H (309 aa).

Residues 39–41, D59, F83, D100, and Q107 contribute to the S-adenosyl-L-methionine site; that span reads GGH.

Belongs to the methyltransferase superfamily. RsmH family.

It localises to the cytoplasm. It carries out the reaction cytidine(1402) in 16S rRNA + S-adenosyl-L-methionine = N(4)-methylcytidine(1402) in 16S rRNA + S-adenosyl-L-homocysteine + H(+). In terms of biological role, specifically methylates the N4 position of cytidine in position 1402 (C1402) of 16S rRNA. The polypeptide is Ribosomal RNA small subunit methyltransferase H (Delftia acidovorans (strain DSM 14801 / SPH-1)).